The sequence spans 63 residues: Kappa-theraphotoxin-Gr3a (63 aa).

An N-terminal signal peptide occupies residues 1 to 21 (MKTSVFVLVLGLVLLFAVSFA). Positions 22 to 29 (TEMEESAR) are excised as a propeptide. 3 cysteine pairs are disulfide-bonded: Cys-31–Cys-45, Cys-38–Cys-50, and Cys-44–Cys-57.

Belongs to the neurotoxin 10 (Hwtx-1) family. 63 (VsTx1) subfamily. Expressed by the venom gland.

It is found in the secreted. Inhibits sodium channels Nav1.7/SCN9A and potassium channels Kv11.1/KCNH2. Also binds the voltage-sensor domain of the potassium channel KvAP (from the archaeon Aeropyrum pernix) with very slow apparent binding kinetics and affects channel gating. Reaches its target by dynamically partitioning into anionic or zwitterionic headgroup lipid membranes. May bind to the open state of KvAP. This Grammostola rosea (Chilean rose tarantula) protein is Kappa-theraphotoxin-Gr3a.